We begin with the raw amino-acid sequence, 310 residues long: Ribosomal RNA small subunit methyltransferase H (310 aa).

Residues 33-35 (AGH), Asp-53, Phe-79, Asp-100, and Gln-107 contribute to the S-adenosyl-L-methionine site.

This sequence belongs to the methyltransferase superfamily. RsmH family.

The protein localises to the cytoplasm. It catalyses the reaction cytidine(1402) in 16S rRNA + S-adenosyl-L-methionine = N(4)-methylcytidine(1402) in 16S rRNA + S-adenosyl-L-homocysteine + H(+). Functionally, specifically methylates the N4 position of cytidine in position 1402 (C1402) of 16S rRNA. This Clostridium botulinum (strain Alaska E43 / Type E3) protein is Ribosomal RNA small subunit methyltransferase H.